The chain runs to 332 residues: Ornithine carbamoyltransferase, catabolic (332 aa).

Carbamoyl phosphate-binding positions include 60 to 63, Gln87, Arg111, and 138 to 141; these read STRT and HPTQ. Residues Asn170, Asp230, and 234 to 235 each bind L-ornithine; that span reads SM. Carbamoyl phosphate contacts are provided by residues 271 to 272 and Arg316; that span reads CL.

The protein belongs to the aspartate/ornithine carbamoyltransferase superfamily. OTCase family.

It is found in the cytoplasm. It catalyses the reaction carbamoyl phosphate + L-ornithine = L-citrulline + phosphate + H(+). It functions in the pathway amino-acid degradation; L-arginine degradation via ADI pathway; carbamoyl phosphate from L-arginine: step 2/2. In terms of biological role, reversibly catalyzes the transfer of the carbamoyl group from carbamoyl phosphate (CP) to the N(epsilon) atom of ornithine (ORN) to produce L-citrulline. This is Ornithine carbamoyltransferase, catabolic from Bacillus thuringiensis subsp. konkukian (strain 97-27).